Reading from the N-terminus, the 322-residue chain is Ribose-phosphate pyrophosphokinase 1 (322 aa).

Residues 39–41 (DGE) and 98–99 (RQ) each bind ATP. Mg(2+)-binding residues include His-132 and Asp-173. Lys-196 is an active-site residue. D-ribose 5-phosphate contacts are provided by residues Arg-198, Asp-224, and 228-232 (DTAGT).

This sequence belongs to the ribose-phosphate pyrophosphokinase family. Class I subfamily. Homohexamer. Mg(2+) serves as cofactor.

It is found in the cytoplasm. The enzyme catalyses D-ribose 5-phosphate + ATP = 5-phospho-alpha-D-ribose 1-diphosphate + AMP + H(+). Its pathway is metabolic intermediate biosynthesis; 5-phospho-alpha-D-ribose 1-diphosphate biosynthesis; 5-phospho-alpha-D-ribose 1-diphosphate from D-ribose 5-phosphate (route I): step 1/1. Functionally, involved in the biosynthesis of the central metabolite phospho-alpha-D-ribosyl-1-pyrophosphate (PRPP) via the transfer of pyrophosphoryl group from ATP to 1-hydroxyl of ribose-5-phosphate (Rib-5-P). This chain is Ribose-phosphate pyrophosphokinase 1, found in Streptococcus agalactiae serotype III (strain NEM316).